Reading from the N-terminus, the 287-residue chain is Probable endoribonuclease YicC (287 aa).

The protein belongs to the YicC/YloC family. The cofactor is a divalent metal cation.

Functionally, probably a ssRNA endonuclease. Its function is as follows. Might contribute to small RNA (sRNA) regulation. In Haemophilus influenzae (strain ATCC 51907 / DSM 11121 / KW20 / Rd), this protein is Probable endoribonuclease YicC.